Consider the following 487-residue polypeptide: Serine carboxypeptidase-like 37 (487 aa).

A signal peptide spans methionine 1 to glycine 28. A glycan (N-linked (GlcNAc...) asparagine) is linked at asparagine 105. Disulfide bonds link cysteine 120/cysteine 368, cysteine 280/cysteine 291, and cysteine 315/cysteine 336. The active site involves serine 215. N-linked (GlcNAc...) asparagine glycosylation is found at asparagine 317, asparagine 357, and asparagine 375. The active site involves aspartate 407. Residues asparagine 423 and asparagine 449 are each glycosylated (N-linked (GlcNAc...) asparagine). The active site involves histidine 460.

It belongs to the peptidase S10 family. In terms of tissue distribution, expressed in seedlings, roots, leaves, stems, flowers and siliques.

The protein localises to the secreted. Its function is as follows. Probable carboxypeptidase. The chain is Serine carboxypeptidase-like 37 (SCPL37) from Arabidopsis thaliana (Mouse-ear cress).